The primary structure comprises 1081 residues: Cellulose synthase A catalytic subunit 1 [UDP-forming] (1081 aa).

Methionine 1 carries the N-acetylmethionine modification. Residues 1 to 270 lie on the Cytoplasmic side of the membrane; it reads MEASAGLVAG…SRVVPIPSSR (270 aa). Residues cysteine 39, cysteine 42, cysteine 58, cysteine 61, cysteine 66, cysteine 69, cysteine 81, and cysteine 84 each coordinate Zn(2+). The segment at 39–85 adopts an RING-type; degenerate zinc-finger fold; the sequence is CQICGDDVGLAETGDVFVACNECAFPVCRPCYEYERKDGTQCCPQCK. Residues 118–195 are disordered; it reads GANKARHQRH…RQPVPVRIVD (78 aa). The segment covering 127-139 has biased composition (basic and acidic residues); that stretch reads HGEEFSSSSRHES. Residues 158–168 are compositionally biased toward polar residues; it reads PDTQSVRTTSG. The chain crosses the membrane as a helical span at residues 271–291; the sequence is LTPYRVVIILRLIILCFFLQY. Topologically, residues 292-299 are extracellular; it reads RTTHPVKN. A helical membrane pass occupies residues 300 to 320; that stretch reads AYPLWLTSVICEIWFAFSWLL. Topologically, residues 321 to 856 are cytoplasmic; that stretch reads DQFPKWYPIN…LLERIAYINT (536 aa). 4 residues coordinate UDP-alpha-D-glucose: serine 359, lysine 365, glutamate 366, and aspartate 395. Aspartate 395 is an active-site residue. A coiled-coil region spans residues 449–476; sequence VKERRAMKREYEEFKVRINALVAKAQKI. Lysine 536 provides a ligand contact to UDP-alpha-D-glucose. The Mn(2+) site is built by lysine 537 and aspartate 561. Aspartate 780 is a catalytic residue. A helical transmembrane segment spans residues 857–877; that stretch reads IVYPITSIPLIAYCILPAFCL. Topologically, residues 878 to 889 are extracellular; sequence ITDRFIIPEISN. Residues 890-910 traverse the membrane as a helical segment; sequence YASIWFILLFISIAVTGILEL. Over 911–925 the chain is Cytoplasmic; the sequence is RWSGVSIEDWWRNEQ. A helical transmembrane segment spans residues 926 to 946; sequence FWVIGGTSAHLFAVFQGLLKV. Residues 947–976 lie on the Extracellular side of the membrane; that stretch reads LAGIDTNFTVTSKATDEDGDFAELYIFKWT. Asparagine 953 carries an N-linked (GlcNAc...) asparagine glycan. The chain crosses the membrane as a helical span at residues 977–997; sequence ALLIPPTTVLLVNLIGIVAGV. The Cytoplasmic portion of the chain corresponds to 998 to 1008; sequence SYAVNSGYQSW. Residues 1009–1029 form a helical membrane-spanning segment; it reads GPLFGKLFFALWVIAHLYPFL. At 1030-1038 the chain is on the extracellular side; that stretch reads KGLLGRQNR. Residues 1039 to 1059 form a helical membrane-spanning segment; the sequence is TPTIVIVWSVLLASIFSLLWV. Over 1060 to 1081 the chain is Cytoplasmic; the sequence is RINPFVDANPNANNFNGKGGVF.

Belongs to the glycosyltransferase 2 family. Plant cellulose synthase subfamily. In terms of assembly, interacts with CESA3 and CESA6. Assembly with CESA3 and CESA6 is required for functional complex in primary cell wall cellulose synthesis. Interacts with STL1 and STL2, but not with GOT1. Binds to CSI1. Interacts with PAT24/TIP1. Zn(2+) serves as cofactor. Mn(2+) is required as a cofactor. Post-translationally, S-acylated. Expressed in germinating seeds, seedlings, roots, stems, shoots leaves and flowers, but not in mature flowers.

The protein resides in the cell membrane. The enzyme catalyses [(1-&gt;4)-beta-D-glucosyl](n) + UDP-alpha-D-glucose = [(1-&gt;4)-beta-D-glucosyl](n+1) + UDP + H(+). It participates in glycan metabolism; plant cellulose biosynthesis. Its function is as follows. Catalytic subunit of cellulose synthase terminal complexes ('rosettes'), required for beta-1,4-glucan microfibril crystallization, a major mechanism of the cell wall formation. Involved in the primary cell wall formation. Required during embryogenesis for cell elongation, orientation of cell expansion and complex cell wall formations, such as interdigitated pattern of epidermal pavement cells, stomatal guard cells and trichomes. Plays a role in lateral roots formation, but seems not necessary for the development of tip-growing cells such as root hairs. The presence of each protein CESA1 and CESA6 is critical for cell expansion after germination. The protein is Cellulose synthase A catalytic subunit 1 [UDP-forming] of Arabidopsis thaliana (Mouse-ear cress).